The chain runs to 297 residues: Lipoyl synthase (297 aa).

[4Fe-4S] cluster-binding residues include cysteine 34, cysteine 39, cysteine 45, cysteine 60, cysteine 64, cysteine 67, and serine 273. The 217-residue stretch at 46–262 (WNKRHATVMI…KYVAYSKGFL (217 aa)) folds into the Radical SAM core domain.

The protein belongs to the radical SAM superfamily. Lipoyl synthase family. It depends on [4Fe-4S] cluster as a cofactor.

It localises to the cytoplasm. It catalyses the reaction [[Fe-S] cluster scaffold protein carrying a second [4Fe-4S](2+) cluster] + N(6)-octanoyl-L-lysyl-[protein] + 2 oxidized [2Fe-2S]-[ferredoxin] + 2 S-adenosyl-L-methionine + 4 H(+) = [[Fe-S] cluster scaffold protein] + N(6)-[(R)-dihydrolipoyl]-L-lysyl-[protein] + 4 Fe(3+) + 2 hydrogen sulfide + 2 5'-deoxyadenosine + 2 L-methionine + 2 reduced [2Fe-2S]-[ferredoxin]. Its pathway is protein modification; protein lipoylation via endogenous pathway; protein N(6)-(lipoyl)lysine from octanoyl-[acyl-carrier-protein]: step 2/2. Functionally, catalyzes the radical-mediated insertion of two sulfur atoms into the C-6 and C-8 positions of the octanoyl moiety bound to the lipoyl domains of lipoate-dependent enzymes, thereby converting the octanoylated domains into lipoylated derivatives. This is Lipoyl synthase from Ehrlichia chaffeensis (strain ATCC CRL-10679 / Arkansas).